A 331-amino-acid polypeptide reads, in one-letter code: Phosphate acyltransferase (331 aa).

It belongs to the PlsX family. In terms of assembly, homodimer. Probably interacts with PlsY.

It localises to the cytoplasm. The enzyme catalyses a fatty acyl-[ACP] + phosphate = an acyl phosphate + holo-[ACP]. It functions in the pathway lipid metabolism; phospholipid metabolism. Functionally, catalyzes the reversible formation of acyl-phosphate (acyl-PO(4)) from acyl-[acyl-carrier-protein] (acyl-ACP). This enzyme utilizes acyl-ACP as fatty acyl donor, but not acyl-CoA. The sequence is that of Phosphate acyltransferase from Chlorobaculum tepidum (strain ATCC 49652 / DSM 12025 / NBRC 103806 / TLS) (Chlorobium tepidum).